A 307-amino-acid chain; its full sequence is UPF0276 protein HI_1600 (307 aa).

It belongs to the UPF0276 family.

The sequence is that of UPF0276 protein HI_1600 from Haemophilus influenzae (strain ATCC 51907 / DSM 11121 / KW20 / Rd).